Reading from the N-terminus, the 175-residue chain is Adenine phosphoribosyltransferase (175 aa).

This sequence belongs to the purine/pyrimidine phosphoribosyltransferase family. Homodimer.

The protein resides in the cytoplasm. It catalyses the reaction AMP + diphosphate = 5-phospho-alpha-D-ribose 1-diphosphate + adenine. Its pathway is purine metabolism; AMP biosynthesis via salvage pathway; AMP from adenine: step 1/1. Its function is as follows. Catalyzes a salvage reaction resulting in the formation of AMP, that is energically less costly than de novo synthesis. This Francisella tularensis subsp. holarctica (strain FTNF002-00 / FTA) protein is Adenine phosphoribosyltransferase.